The primary structure comprises 508 residues: NAD(P)H-quinone oxidoreductase subunit 2 B, chloroplastic (508 aa).

A run of 13 helical transmembrane segments spans residues 24 to 44 (LLLF…GLIL), 59 to 79 (WLYF…LFRW), 99 to 119 (IFQF…VEYI), 124 to 144 (MAIT…MFLC), 149 to 169 (FITI…LSGY), 184 to 204 (LLMG…LYGL), 227 to 247 (PGIS…LSPA), 295 to 315 (WHLL…LIAI), 323 to 343 (MLAY…IVGD), 354 to 374 (YMLF…LFGL), 395 to 415 (ALSL…AGFF), 418 to 438 (LYLF…IGLL), and 482 to 502 (MIVC…IIAI).

It belongs to the complex I subunit 2 family. In terms of assembly, NDH is composed of at least 16 different subunits, 5 of which are encoded in the nucleus.

It is found in the plastid. It localises to the chloroplast thylakoid membrane. It catalyses the reaction a plastoquinone + NADH + (n+1) H(+)(in) = a plastoquinol + NAD(+) + n H(+)(out). The enzyme catalyses a plastoquinone + NADPH + (n+1) H(+)(in) = a plastoquinol + NADP(+) + n H(+)(out). NDH shuttles electrons from NAD(P)H:plastoquinone, via FMN and iron-sulfur (Fe-S) centers, to quinones in the photosynthetic chain and possibly in a chloroplast respiratory chain. The immediate electron acceptor for the enzyme in this species is believed to be plastoquinone. Couples the redox reaction to proton translocation, and thus conserves the redox energy in a proton gradient. This chain is NAD(P)H-quinone oxidoreductase subunit 2 B, chloroplastic, found in Ipomoea purpurea (Common morning glory).